The following is a 178-amino-acid chain: ATP synthase subunit delta (178 aa).

It belongs to the ATPase delta chain family. F-type ATPases have 2 components, F(1) - the catalytic core - and F(0) - the membrane proton channel. F(1) has five subunits: alpha(3), beta(3), gamma(1), delta(1), epsilon(1). F(0) has three main subunits: a(1), b(2) and c(10-14). The alpha and beta chains form an alternating ring which encloses part of the gamma chain. F(1) is attached to F(0) by a central stalk formed by the gamma and epsilon chains, while a peripheral stalk is formed by the delta and b chains.

The protein localises to the cell membrane. F(1)F(0) ATP synthase produces ATP from ADP in the presence of a proton or sodium gradient. F-type ATPases consist of two structural domains, F(1) containing the extramembraneous catalytic core and F(0) containing the membrane proton channel, linked together by a central stalk and a peripheral stalk. During catalysis, ATP synthesis in the catalytic domain of F(1) is coupled via a rotary mechanism of the central stalk subunits to proton translocation. Its function is as follows. This protein is part of the stalk that links CF(0) to CF(1). It either transmits conformational changes from CF(0) to CF(1) or is implicated in proton conduction. The sequence is that of ATP synthase subunit delta from Streptococcus equi subsp. zooepidemicus (strain MGCS10565).